Reading from the N-terminus, the 316-residue chain is MAEQLILKGTLEGHNGWVTSLATSMENPNMLLSSSRDKTLIIWNLTRDETSYGYPKRSLKGHSHIVSDCVISSDGAYALSASWDKTLRLWELATGTTTRRFVGHTNDVLSVSFSADNRQIVSGSRDRSIKLWNTLGDCKYTITEKGHSEWVSCVRFSPNPQNPVIVSSGWDKLVKVWELSSCKLQTDHIGHTGYINTVTISPDGSLCASGGKDGTTMLWDLNESKHLYSLNANDEIHALVFSPNRYWLCAATASSIIIFDLEKKSKVDELKPEFAAVGKKSREPECISLAWSADGQTLFAGYTDNIIRAWGVMSRA.

WD repeat units lie at residues Gly13–Gly53, Gly61–Arg100, Gly103–Ile142, Gly146–Asp187, Gly190–Ser229, Asn231–Glu269, and Ser281–Ala316.

Belongs to the WD repeat G protein beta family. Ribosomal protein RACK1 subfamily. In terms of assembly, interacts with MST50 and MCK1.

In terms of biological role, involved in regulating the cell wall integrity and MPS1 activation via its interaction with the MAPKKK MCK1. In Pyricularia oryzae (strain 70-15 / ATCC MYA-4617 / FGSC 8958) (Rice blast fungus), this protein is MST50-interacting protein 11.